The sequence spans 214 residues: Small ribosomal subunit protein uS3c (214 aa).

Positions 39–111 (IRTYIHTISK…QLTINVLEVE (73 aa)) constitute a KH type-2 domain.

It belongs to the universal ribosomal protein uS3 family. As to quaternary structure, part of the 30S ribosomal subunit.

The protein localises to the plastid. The protein resides in the chloroplast. This chain is Small ribosomal subunit protein uS3c (rps3), found in Phaeodactylum tricornutum (strain CCAP 1055/1).